A 336-amino-acid chain; its full sequence is 4-hydroxy-3-methylbut-2-enyl diphosphate reductase (336 aa).

C37 contacts [4Fe-4S] cluster. (2E)-4-hydroxy-3-methylbut-2-enyl diphosphate-binding residues include H66 and H99. 2 residues coordinate dimethylallyl diphosphate: H66 and H99. 2 residues coordinate isopentenyl diphosphate: H66 and H99. Residue C121 coordinates [4Fe-4S] cluster. H149 serves as a coordination point for (2E)-4-hydroxy-3-methylbut-2-enyl diphosphate. H149 is a dimethylallyl diphosphate binding site. Isopentenyl diphosphate is bound at residue H149. E151 acts as the Proton donor in catalysis. A (2E)-4-hydroxy-3-methylbut-2-enyl diphosphate-binding site is contributed by T189. C219 is a [4Fe-4S] cluster binding site. (2E)-4-hydroxy-3-methylbut-2-enyl diphosphate is bound by residues S247, S248, N249, and S292. 4 residues coordinate dimethylallyl diphosphate: S247, S248, N249, and S292. Positions 247, 248, 249, and 292 each coordinate isopentenyl diphosphate.

This sequence belongs to the IspH family. The cofactor is [4Fe-4S] cluster.

It catalyses the reaction isopentenyl diphosphate + 2 oxidized [2Fe-2S]-[ferredoxin] + H2O = (2E)-4-hydroxy-3-methylbut-2-enyl diphosphate + 2 reduced [2Fe-2S]-[ferredoxin] + 2 H(+). It carries out the reaction dimethylallyl diphosphate + 2 oxidized [2Fe-2S]-[ferredoxin] + H2O = (2E)-4-hydroxy-3-methylbut-2-enyl diphosphate + 2 reduced [2Fe-2S]-[ferredoxin] + 2 H(+). It participates in isoprenoid biosynthesis; dimethylallyl diphosphate biosynthesis; dimethylallyl diphosphate from (2E)-4-hydroxy-3-methylbutenyl diphosphate: step 1/1. Its pathway is isoprenoid biosynthesis; isopentenyl diphosphate biosynthesis via DXP pathway; isopentenyl diphosphate from 1-deoxy-D-xylulose 5-phosphate: step 6/6. Functionally, catalyzes the conversion of 1-hydroxy-2-methyl-2-(E)-butenyl 4-diphosphate (HMBPP) into a mixture of isopentenyl diphosphate (IPP) and dimethylallyl diphosphate (DMAPP). Acts in the terminal step of the DOXP/MEP pathway for isoprenoid precursor biosynthesis. This chain is 4-hydroxy-3-methylbut-2-enyl diphosphate reductase, found in Rhodococcus jostii (strain RHA1).